The chain runs to 228 residues: Putative L-ribulose-5-phosphate 4-epimerase UlaF (228 aa).

Substrate-binding positions include 26 to 27 (GN), 43 to 44 (SG), and 72 to 73 (SS). Zn(2+)-binding residues include Asp-74, His-93, and His-95. Catalysis depends on Asp-118, which acts as the Proton donor/acceptor. His-167 serves as a coordination point for Zn(2+). The Proton donor/acceptor role is filled by Tyr-225.

Belongs to the aldolase class II family. AraD/FucA subfamily. Zn(2+) is required as a cofactor.

It carries out the reaction L-ribulose 5-phosphate = D-xylulose 5-phosphate. It functions in the pathway cofactor degradation; L-ascorbate degradation; D-xylulose 5-phosphate from L-ascorbate: step 4/4. Functionally, catalyzes the isomerization of L-ribulose 5-phosphate to D-xylulose 5-phosphate. Is involved in the anaerobic L-ascorbate utilization. This chain is Putative L-ribulose-5-phosphate 4-epimerase UlaF, found in Shigella boydii serotype 4 (strain Sb227).